The sequence spans 141 residues: Nucleoside diphosphate kinase (141 aa).

ATP is bound by residues Lys-11, Phe-59, Arg-87, Thr-93, Arg-104, and Asn-114. Catalysis depends on His-117, which acts as the Pros-phosphohistidine intermediate.

Belongs to the NDK family. As to quaternary structure, homotetramer. The cofactor is Mg(2+).

The protein resides in the cytoplasm. The enzyme catalyses a 2'-deoxyribonucleoside 5'-diphosphate + ATP = a 2'-deoxyribonucleoside 5'-triphosphate + ADP. The catalysed reaction is a ribonucleoside 5'-diphosphate + ATP = a ribonucleoside 5'-triphosphate + ADP. Its function is as follows. Major role in the synthesis of nucleoside triphosphates other than ATP. The ATP gamma phosphate is transferred to the NDP beta phosphate via a ping-pong mechanism, using a phosphorylated active-site intermediate. This Neisseria gonorrhoeae (strain NCCP11945) protein is Nucleoside diphosphate kinase.